The following is a 440-amino-acid chain: Histidinol dehydrogenase (440 aa).

NAD(+)-binding residues include Tyr136, Gln197, and Asn220. Ser243, Gln265, and His268 together coordinate substrate. Positions 265 and 268 each coordinate Zn(2+). Catalysis depends on proton acceptor residues Glu333 and His334. Residues His334, Asp367, Glu421, and His426 each contribute to the substrate site. Asp367 is a Zn(2+) binding site. His426 is a binding site for Zn(2+).

The protein belongs to the histidinol dehydrogenase family. Requires Zn(2+) as cofactor.

It catalyses the reaction L-histidinol + 2 NAD(+) + H2O = L-histidine + 2 NADH + 3 H(+). It functions in the pathway amino-acid biosynthesis; L-histidine biosynthesis; L-histidine from 5-phospho-alpha-D-ribose 1-diphosphate: step 9/9. Catalyzes the sequential NAD-dependent oxidations of L-histidinol to L-histidinaldehyde and then to L-histidine. The polypeptide is Histidinol dehydrogenase (Pseudomonas aeruginosa (strain ATCC 15692 / DSM 22644 / CIP 104116 / JCM 14847 / LMG 12228 / 1C / PRS 101 / PAO1)).